Reading from the N-terminus, the 206-residue chain is Cytochrome c (206 aa).

A run of 3 helical transmembrane segments spans residues 10–30, 49–69, and 76–96; these read IALA…VSFL, FMGW…LGKM, and KWFL…FLSL. Positions 152, 155, 156, and 182 each coordinate heme.

Monomer. Component of the photosynthetic reaction center composed of protein subunits PscA, PscC, PscB and PscD. The reaction center interacts with FmoA (which forms the Fenna-Matthews-Olson (FMO) complex). The reaction center/FmoA complex has two PscA subunits, one PscB and one PscD subunit, probably two FmoA complexes and at least one PscC subunit. Binds 1 heme group per subunit.

It localises to the cell inner membrane. Functionally, monoheme cytochrome which is the immediate electron donor to P840 of the photosynthetic reaction center complex. This is Cytochrome c (pscC) from Chlorobaculum tepidum (strain ATCC 49652 / DSM 12025 / NBRC 103806 / TLS) (Chlorobium tepidum).